The chain runs to 89 residues: uncharacterized protein (89 aa).

This sequence to M.tuberculosis Rv3402c.

This is an uncharacterized protein from Mycobacterium tuberculosis (strain CDC 1551 / Oshkosh).